Reading from the N-terminus, the 323-residue chain is E3 ubiquitin-protein ligase SIRP1 (323 aa).

An RING-type; atypical zinc finger spans residues 199–240 (CSVCLDDLEVGSQAKQMPCEHKFHSSCILPWLELHSSCPVCR). Disordered stretches follow at residues 248–280 (TKDL…ESSN) and 296–323 (REAQ…AGHS). Residues 259-269 (RVEDSHEEVRA) are compositionally biased toward basic and acidic residues.

It localises to the cytoplasm. It carries out the reaction S-ubiquitinyl-[E2 ubiquitin-conjugating enzyme]-L-cysteine + [acceptor protein]-L-lysine = [E2 ubiquitin-conjugating enzyme]-L-cysteine + N(6)-ubiquitinyl-[acceptor protein]-L-lysine.. The protein operates within protein modification; protein ubiquitination. In terms of biological role, possesses E3 ubiqutin-protein ligase activity in vitro. Acts as negative regulator of salinity stress tolerance mediated by the ubiquitin-proteasome degradation pathway. The chain is E3 ubiquitin-protein ligase SIRP1 from Oryza sativa subsp. japonica (Rice).